Consider the following 555-residue polypeptide: Methyl-coenzyme M reductase subunit alpha (555 aa).

A coenzyme F430-binding site is contributed by Q152. Residues R230, 261-262 (KH), and R275 each bind coenzyme B. Coenzyme M is bound by residues Y337 and Y448.

The protein belongs to the methyl-coenzyme M reductase alpha subunit family. MCR is a hexamer of two alpha, two beta, and two gamma chains, forming a dimer of heterotrimers. The cofactor is coenzyme F430.

Its subcellular location is the cytoplasm. It carries out the reaction coenzyme B + methyl-coenzyme M = methane + coenzyme M-coenzyme B heterodisulfide. The protein operates within one-carbon metabolism; methyl-coenzyme M reduction; methane from methyl-coenzyme M: step 1/1. Its function is as follows. Component of the methyl-coenzyme M reductase (MCR) I that catalyzes the reductive cleavage of methyl-coenzyme M (CoM-S-CH3 or 2-(methylthio)ethanesulfonate) using coenzyme B (CoB or 7-mercaptoheptanoylthreonine phosphate) as reductant which results in the production of methane and the mixed heterodisulfide of CoB and CoM (CoM-S-S-CoB). This is the final step in methanogenesis. This is Methyl-coenzyme M reductase subunit alpha (mcrA) from Methanococcus voltae.